The following is a 74-amino-acid chain: Putative defensin-like protein 12 (74 aa).

An N-terminal signal peptide occupies residues methionine 1–cysteine 26. 3 cysteine pairs are disulfide-bonded: cysteine 26–cysteine 50, cysteine 33–cysteine 59, and cysteine 39–cysteine 61.

This sequence belongs to the DEFL family.

The protein resides in the secreted. The protein is Putative defensin-like protein 12 of Arabidopsis thaliana (Mouse-ear cress).